The sequence spans 526 residues: Acetyl-CoA hydrolase (526 aa).

277 to 281 lines the CoA pocket; that stretch reads GIGNI. The active-site 5-glutamyl coenzyme A thioester intermediate is glutamate 302. The CoA site is built by asparagine 392 and glycine 396.

It belongs to the acetyl-CoA hydrolase/transferase family.

It localises to the cytoplasm. It catalyses the reaction acetyl-CoA + H2O = acetate + CoA + H(+). In terms of biological role, presumably involved in regulating the intracellular acetyl-CoA pool for fatty acid and cholesterol synthesis and fatty acid oxidation. The sequence is that of Acetyl-CoA hydrolase (ACH1) from Candida glabrata (strain ATCC 2001 / BCRC 20586 / JCM 3761 / NBRC 0622 / NRRL Y-65 / CBS 138) (Yeast).